A 273-amino-acid polypeptide reads, in one-letter code: Alcohol dehydrogenase-related 31 kDa protein (273 aa).

NAD(+) is bound at residue 11 to 34; it reads YVADCGGIALETCKVLMTKNIAKL. Position 139 (serine 139) interacts with substrate. Catalysis depends on tyrosine 152, which acts as the Proton acceptor.

Belongs to the short-chain dehydrogenases/reductases (SDR) family.

In Drosophila immigrans (Fruit fly), this protein is Alcohol dehydrogenase-related 31 kDa protein (Adhr).